The chain runs to 103 residues: Small ribosomal subunit protein uS10 (103 aa).

The protein belongs to the universal ribosomal protein uS10 family. In terms of assembly, part of the 30S ribosomal subunit.

Its function is as follows. Involved in the binding of tRNA to the ribosomes. The chain is Small ribosomal subunit protein uS10 from Natranaerobius thermophilus (strain ATCC BAA-1301 / DSM 18059 / JW/NM-WN-LF).